A 91-amino-acid polypeptide reads, in one-letter code: CRISPR-associated endoribonuclease Cas2 2 (91 aa).

Asp-8 lines the Mg(2+) pocket.

This sequence belongs to the CRISPR-associated endoribonuclease Cas2 protein family. As to quaternary structure, homodimer, forms a heterotetramer with a Cas1 homodimer. Mg(2+) is required as a cofactor.

Its function is as follows. CRISPR (clustered regularly interspaced short palindromic repeat), is an adaptive immune system that provides protection against mobile genetic elements (viruses, transposable elements and conjugative plasmids). CRISPR clusters contain sequences complementary to antecedent mobile elements and target invading nucleic acids. CRISPR clusters are transcribed and processed into CRISPR RNA (crRNA). Functions as a ssRNA-specific endoribonuclease. Involved in the integration of spacer DNA into the CRISPR cassette. In Pyrobaculum aerophilum (strain ATCC 51768 / DSM 7523 / JCM 9630 / CIP 104966 / NBRC 100827 / IM2), this protein is CRISPR-associated endoribonuclease Cas2 2.